Reading from the N-terminus, the 143-residue chain is Crossover junction endodeoxyribonuclease Hjc (143 aa).

A Mg(2+)-binding site is contributed by glutamate 12. The active site involves serine 32. Positions 42 and 55 each coordinate Mg(2+).

The protein belongs to the Holliday junction resolvase Hjc family. In terms of assembly, homodimer. Interacts with PCNA subunit PCNA1. It depends on Mg(2+) as a cofactor.

The enzyme catalyses Endonucleolytic cleavage at a junction such as a reciprocal single-stranded crossover between two homologous DNA duplexes (Holliday junction).. With respect to regulation, autoinhibits at very high concentrations, possibly because of extreme junction distortion. Inhibition (and activity at low concentrations of enzyme) is stimulated by dsDNA and Sso7d. Activity stimulated by PCNA subunit PCNA1. Functionally, a structure-specific endonuclease that resolves Holliday junction (HJ) intermediates during genetic recombination; may have some degree of sequence preference in a mobile junction. Cleaves 4-way DNA junctions introducing paired nicks in opposing strands, leaving a 5'-terminal phosphate and a 3'-terminal hydroxyl group that are subsequently ligated to produce recombinant products. Can cleave all 4 strands 3 bases 3' of the junction center. Cleaves both mobile and immobile junctions. Modifies the structure of the 4-way DNA junction, a model Holliday junction structure. The protein forms multiple complexes with 4-way DNA, suggesting more than 1 homodimer can bind to each junction. The chain is Crossover junction endodeoxyribonuclease Hjc from Saccharolobus solfataricus (strain ATCC 35092 / DSM 1617 / JCM 11322 / P2) (Sulfolobus solfataricus).